The following is a 536-amino-acid chain: GATA zinc finger domain-containing protein 9 (536 aa).

2 stretches are compositionally biased toward polar residues: residues 1–20 (MTSFLLFNPGSLQQQQQPHS) and 36–55 (CQSSFSTPLGGSNGINNPNA). Disordered stretches follow at residues 1-77 (MTSF…LSGS), 183-211 (SSSLSSEDDDCCYETEEDDNGEDGEVVRS), 237-258 (RSAFKKNKKDYHHGSSAGGGGS), 273-342 (QLHY…GFVQ), and 370-423 (ALFS…NISS). The span at 56 to 72 (TTNNTTTTTTTTTTTTN) shows a compositional bias: low complexity. Positions 188–206 (SEDDDCCYETEEDDNGEDG) are enriched in acidic residues. The span at 237–247 (RSAFKKNKKDY) shows a compositional bias: basic residues. Over residues 273–283 (QLHYSNSMTDN) the composition is skewed to polar residues. 2 stretches are compositionally biased toward low complexity: residues 318 to 335 (SNSNNNNNNNNNNNNNNN) and 379 to 399 (PSPTLGSSCGSSSPGLNNSGN). The GATA-type zinc finger occupies 479–504 (CRHCGTTDTPEWRRGPDGRKSLCNAC).

The polypeptide is GATA zinc finger domain-containing protein 9 (gtaI) (Dictyostelium discoideum (Social amoeba)).